Here is a 104-residue protein sequence, read N- to C-terminus: Complex III assembly factor LYRM7 (104 aa).

Residues 21–48 adopt a coiled-coil conformation; that stretch reads VFQNDHRALEAARQRINEEFKKNKRECS.

The protein belongs to the complex I LYR family. As to quaternary structure, interacts with UQCRFS1.

The protein localises to the mitochondrion matrix. In terms of biological role, assembly factor required for Rieske Fe-S protein UQCRFS1 incorporation into the cytochrome b-c1 (CIII) complex. Functions as a chaperone, binding to this subunit within the mitochondrial matrix and stabilizing it prior to its translocation and insertion into the late CIII dimeric intermediate within the mitochondrial inner membrane. This chain is Complex III assembly factor LYRM7 (lyrm7), found in Xenopus laevis (African clawed frog).